The sequence spans 336 residues: HTH-type transcriptional repressor PurR (336 aa).

The 55-residue stretch at 2–56 folds into the HTH lacI-type domain; that stretch reads ATIKDVAKMAGVSTTTVSHVINKTRFVAKDTEEAVLSAIKQLNYSPSAVARSLKV. A DNA-binding region (H-T-H motif) is located at residues 4-23; the sequence is IKDVAKMAGVSTTTVSHVIN. The DNA-binding element occupies 48-56; sequence SAVARSLKV. 5 residues coordinate hypoxanthine: tyrosine 73, lysine 188, threonine 190, phenylalanine 219, and aspartate 273.

Homodimer.

The protein operates within purine metabolism; purine nucleotide biosynthesis [regulation]. Its function is as follows. Is the main repressor of the genes involved in the de novo synthesis of purine nucleotides, regulating purB, purC, purEK, purF, purHD, purL, purMN and guaBA expression. PurR is allosterically activated to bind its cognate DNA by binding the purine corepressors, hypoxanthine or guanine, thereby effecting transcription repression. The sequence is that of HTH-type transcriptional repressor PurR from Haemophilus influenzae (strain PittGG).